We begin with the raw amino-acid sequence, 272 residues long: 2-C-methyl-D-erythritol 4-phosphate cytidylyltransferase (272 aa).

The protein belongs to the IspD/TarI cytidylyltransferase family. IspD subfamily.

The catalysed reaction is 2-C-methyl-D-erythritol 4-phosphate + CTP + H(+) = 4-CDP-2-C-methyl-D-erythritol + diphosphate. It functions in the pathway isoprenoid biosynthesis; isopentenyl diphosphate biosynthesis via DXP pathway; isopentenyl diphosphate from 1-deoxy-D-xylulose 5-phosphate: step 2/6. In terms of biological role, catalyzes the formation of 4-diphosphocytidyl-2-C-methyl-D-erythritol from CTP and 2-C-methyl-D-erythritol 4-phosphate (MEP). The chain is 2-C-methyl-D-erythritol 4-phosphate cytidylyltransferase from Xanthomonas oryzae pv. oryzae (strain MAFF 311018).